The primary structure comprises 21 residues: Azemiopsin (21 aa).

Pro residues predominate over residues 1–14 (DNWWPKPPHQGPRP). Positions 1–21 (DNWWPKPPHQGPRPPRPRPKP) are disordered. Implicated in receptor binding regions lie at residues 3-6 (WWPK), 8-11 (PHQG), and 13-14 (RP).

In terms of assembly, monomer. In terms of tissue distribution, expressed by the venom gland.

The protein resides in the secreted. Functionally, in vitro, reversibly blocks human muscle-type nicotinic acetylcholine receptors (nAChR) alpha-1-beta-1-epsilon-delta/CHRNA1-CHRNB1-CHRNE-CHRND (EC(50)=0.44 uM) and alpha-1-beta-1-gamma-delta/CHRNA1-CHRNB1-CHRNG-CHRND (EC(50)=1.56 uM). Binds to nAChR from T.californica (IC(50)=0.03-0.18 uM), human neuronal nAChR alpha-7/CHRNA7 (IC(50)=22 uM) and acetylcholine-binding proteins (AChBP) from L.stagnalis (IC(50)=63 uM) and A.californica (IC(50)=230 uM). The chain is Azemiopsin from Azemiops feae (Fea's viper).